Consider the following 279-residue polypeptide: 4-diphosphocytidyl-2-C-methyl-D-erythritol kinase (279 aa).

The active site involves Lys-11. 95-105 contacts ATP; that stretch reads PVAAGLGGGSS. Residue Asp-137 is part of the active site.

Belongs to the GHMP kinase family. IspE subfamily.

The enzyme catalyses 4-CDP-2-C-methyl-D-erythritol + ATP = 4-CDP-2-C-methyl-D-erythritol 2-phosphate + ADP + H(+). It functions in the pathway isoprenoid biosynthesis; isopentenyl diphosphate biosynthesis via DXP pathway; isopentenyl diphosphate from 1-deoxy-D-xylulose 5-phosphate: step 3/6. Functionally, catalyzes the phosphorylation of the position 2 hydroxy group of 4-diphosphocytidyl-2C-methyl-D-erythritol. This Geobacter sulfurreducens (strain ATCC 51573 / DSM 12127 / PCA) protein is 4-diphosphocytidyl-2-C-methyl-D-erythritol kinase.